Here is a 168-residue protein sequence, read N- to C-terminus: Small ribosomal subunit protein uS5c (168 aa).

Residues Trp-17–Phe-80 enclose the S5 DRBM domain.

Belongs to the universal ribosomal protein uS5 family. Part of the 30S ribosomal subunit. Contacts protein S4.

The protein resides in the plastid. It localises to the chloroplast. Its function is as follows. With S4 and S12 plays an important role in translational accuracy. The sequence is that of Small ribosomal subunit protein uS5c (rps5) from Cyanidium caldarium (Red alga).